A 532-amino-acid polypeptide reads, in one-letter code: Flavin-containing monooxygenase 3 (532 aa).

FAD is bound by residues 9-13 (GAGVS), E32, 40-41 (LW), and 61-62 (NS). Residues 60-61 (TN) and 195-198 (SGCD) contribute to the NADP(+) site. S401 bears the Phosphoserine mark. Residues 510 to 530 (FFFHWLKPFAIPILLIAVFLG) form a helical membrane-spanning segment.

This sequence belongs to the FMO family. FAD is required as a cofactor. In terms of tissue distribution, liver.

It localises to the microsome membrane. The protein localises to the endoplasmic reticulum membrane. The catalysed reaction is trimethylamine + NADPH + O2 = trimethylamine N-oxide + NADP(+) + H2O. It catalyses the reaction N,N-dimethylaniline + NADPH + O2 + H(+) = N,N-dimethylaniline N-oxide + NADP(+) + H2O. It carries out the reaction hypotaurine + NADPH + O2 + H(+) = taurine + NADP(+) + H2O. The enzyme catalyses (S)-nicotine + NADPH + O2 = trans-(S)-nicotine N(1')-oxide + NADP(+) + H2O. The catalysed reaction is albendazole + NADPH + O2 + H(+) = albendazole S-oxide + NADP(+) + H2O. In terms of biological role, essential hepatic enzyme that catalyzes the oxygenation of a wide variety of nitrogen- and sulfur-containing compounds including drugs as well as dietary compounds. Plays an important role in the metabolism of trimethylamine (TMA), via the production of trimethylamine N-oxide (TMAO) metabolite. TMA is generated by the action of gut microbiota using dietary precursors such as choline, choline containing compounds, betaine or L-carnitine. By regulating TMAO concentration, FMO3 directly impacts both platelet responsiveness and rate of thrombus formation. The protein is Flavin-containing monooxygenase 3 (FMO3) of Macaca mulatta (Rhesus macaque).